Here is a 237-residue protein sequence, read N- to C-terminus: Endonuclease NucS (237 aa).

Belongs to the NucS endonuclease family.

It localises to the cytoplasm. Cleaves both 3' and 5' ssDNA extremities of branched DNA structures. The chain is Endonuclease NucS from Saccharolobus islandicus (strain L.S.2.15 / Lassen #1) (Sulfolobus islandicus).